Consider the following 336-residue polypeptide: N-lysine methyltransferase KMT5A (336 aa).

A disordered region spans residues 1-112; that stretch reads MGRGKKMSKP…KPSEQRETEC (112 aa). The segment covering 67–93 has biased composition (basic and acidic residues); that stretch reads SVAHHESKCPGKPLTETRKKAEVEKKR. Residues 200 to 321 enclose the SET domain; that stretch reads EGMKMDMITG…VGEELLYDYG (122 aa). S-adenosyl-L-methionine-binding positions include 210 to 212, Tyr-255, and 282 to 283; these read KGR and NH.

This sequence belongs to the class V-like SAM-binding methyltransferase superfamily. Histone-lysine methyltransferase family. PR/SET subfamily.

Its subcellular location is the nucleus. It localises to the chromosome. The enzyme catalyses L-lysyl(20)-[histone H4] + S-adenosyl-L-methionine = N(6)-methyl-L-lysyl(20)-[histone H4] + S-adenosyl-L-homocysteine + H(+). It carries out the reaction L-lysyl-[protein] + S-adenosyl-L-methionine = N(6)-methyl-L-lysyl-[protein] + S-adenosyl-L-homocysteine + H(+). Functionally, protein-lysine N-methyltransferase that monomethylates both histones and non-histone proteins. Specifically monomethylates 'Lys-20' of histone H4 (H4K20me1). H4K20me1 is enriched during mitosis and represents a specific tag for epigenetic transcriptional repression. Mainly functions in euchromatin regions, thereby playing a central role in the silencing of euchromatic genes. Required for cell proliferation, probably by contributing to the maintenance of proper higher-order structure of DNA during mitosis. Involved in chromosome condensation and proper cytokinesis. Nucleosomes are preferred as substrate compared to free histones. Mediates monomethylation of p53/TP53 at 'Lys-382', leading to repress p53/TP53-target genes. Plays a negative role in TGF-beta response regulation and a positive role in cell migration. This chain is N-lysine methyltransferase KMT5A, found in Xenopus tropicalis (Western clawed frog).